Consider the following 349-residue polypeptide: Ferredoxin--NADP reductase 1 (349 aa).

7 residues coordinate FAD: E36, K44, Y48, V88, L123, D290, and S331.

This sequence belongs to the ferredoxin--NADP reductase type 2 family. Homodimer. It depends on FAD as a cofactor.

The catalysed reaction is 2 reduced [2Fe-2S]-[ferredoxin] + NADP(+) + H(+) = 2 oxidized [2Fe-2S]-[ferredoxin] + NADPH. The sequence is that of Ferredoxin--NADP reductase 1 from Lysinibacillus sphaericus (strain C3-41).